Consider the following 264-residue polypeptide: Phycocyanobilin:ferredoxin oxidoreductase (264 aa).

It belongs to the HY2 family.

It carries out the reaction (2R,3Z)-phycocyanobilin + 4 oxidized [2Fe-2S]-[ferredoxin] = biliverdin IXalpha + 4 reduced [2Fe-2S]-[ferredoxin] + 4 H(+). Catalyzes the four-electron reduction of biliverdin IX-alpha (2-electron reduction at both the A and D rings); the reaction proceeds via an isolatable 2-electron intermediate, 181,182-dihydrobiliverdin. The sequence is that of Phycocyanobilin:ferredoxin oxidoreductase from Prochlorococcus marinus (strain MIT 9303).